An 82-amino-acid polypeptide reads, in one-letter code: uncharacterized protein (82 aa).

A disordered region spans residues 1-20 (MMNLSPPFKSPSGSSRAGRR).

This is an uncharacterized protein from Archaeoglobus fulgidus (strain ATCC 49558 / DSM 4304 / JCM 9628 / NBRC 100126 / VC-16).